Reading from the N-terminus, the 346-residue chain is Protein RecA (346 aa).

67-74 (GPESSGKT) serves as a coordination point for ATP.

The protein belongs to the RecA family.

The protein localises to the cytoplasm. Its function is as follows. Can catalyze the hydrolysis of ATP in the presence of single-stranded DNA, the ATP-dependent uptake of single-stranded DNA by duplex DNA, and the ATP-dependent hybridization of homologous single-stranded DNAs. It interacts with LexA causing its activation and leading to its autocatalytic cleavage. This Saccharopolyspora erythraea (strain ATCC 11635 / DSM 40517 / JCM 4748 / NBRC 13426 / NCIMB 8594 / NRRL 2338) protein is Protein RecA.